A 251-amino-acid chain; its full sequence is Outer membrane protein assembly factor BamD (251 aa).

Positions 1–19 (MKLTKLLSALLVIGLVLGG) are cleaved as a signal peptide. The N-palmitoyl cysteine moiety is linked to residue Cys20. The S-diacylglycerol cysteine moiety is linked to residue Cys20. 3 TPR repeats span residues 33–66 (IATL…HPGN), 70–103 (PQAE…HPAN), and 166–199 (AGKE…YQTT).

This sequence belongs to the BamD family. Part of the Bam complex.

It localises to the cell outer membrane. In terms of biological role, part of the outer membrane protein assembly complex, which is involved in assembly and insertion of beta-barrel proteins into the outer membrane. The protein is Outer membrane protein assembly factor BamD of Rickettsia prowazekii (strain Madrid E).